We begin with the raw amino-acid sequence, 395 residues long: uncharacterized protein (395 aa).

It belongs to the UDP-glycosyltransferase family.

This is an uncharacterized protein from Bacillus subtilis (strain 168).